We begin with the raw amino-acid sequence, 1445 residues long: ABC-type transporter FGSG_00046 (1445 aa).

The next 11 helical transmembrane spans lie at 21–41 (LFEE…MLLV), 77–97 (LILW…AAAL), 119–138 (PSSL…VTRV), 150–170 (ISIL…FESL), 187–207 (EIVG…FILG), 255–277 (TLLR…PLLL), 297–317 (YGLI…TALA), 368–388 (LQFV…IFLL), 392–412 (VALG…GTVL), 481–501 (VFST…YVLM), and 520–540 (SLFS…PAIF). Positions 259-541 (GGLCRLFTAL…FLTSVPAIFS (283 aa)) constitute an ABC transmembrane type-1 1 domain. The region spanning 595 to 821 (IRDGSVRWKG…DEIEASTYSR (227 aa)) is the ABC transporter 1 domain. Residue 627-634 (GSVGSGKS) participates in ATP binding. The interval 803–850 (RNTQKDMQDDEIEASTYSREQNGPKKQEEDANHESNQSPETSQEHELA) is disordered. Positions 824–835 (NGPKKQEEDANH) are enriched in basic and acidic residues. 6 helical membrane passes run 868-888 (GMGF…WQNF), 912-932 (IGVY…VTWF), 1004-1024 (IPLT…QLVM), 1026-1046 (SIGT…LAII), 1116-1136 (LTLV…GVTI), and 1147-1167 (IGLA…LLTW). Residues 974–1173 (HRAPMSYFES…LLTWWTMMEA (200 aa)) form the ABC transmembrane type-1 2 domain. Positions 1210-1441 (IELKELSASY…DVSLFQDLFS (232 aa)) constitute an ABC transporter 2 domain. ATP is bound at residue 1244-1251 (GRTGSGKT).

The protein belongs to the ABC transporter superfamily. ABCC family.

It is found in the cell membrane. In terms of biological role, ABC-type transporter; part of the gene cluster that mediates the biosynthesis of gramillins A and B, bicyclic lipopeptides that induce cell death in maize leaves but not in wheat leaves. May be involved in the secretion of gramillins. This Gibberella zeae (strain ATCC MYA-4620 / CBS 123657 / FGSC 9075 / NRRL 31084 / PH-1) (Wheat head blight fungus) protein is ABC-type transporter FGSG_00046.